The sequence spans 350 residues: Phenylalanine--tRNA ligase alpha subunit (350 aa).

Glu262 serves as a coordination point for Mg(2+).

Belongs to the class-II aminoacyl-tRNA synthetase family. Phe-tRNA synthetase alpha subunit type 1 subfamily. In terms of assembly, tetramer of two alpha and two beta subunits. The cofactor is Mg(2+).

It is found in the cytoplasm. The catalysed reaction is tRNA(Phe) + L-phenylalanine + ATP = L-phenylalanyl-tRNA(Phe) + AMP + diphosphate + H(+). This Thermus thermophilus (strain ATCC 27634 / DSM 579 / HB8) protein is Phenylalanine--tRNA ligase alpha subunit (pheS).